The sequence spans 505 residues: Cobyric acid synthase (505 aa).

A GATase cobBQ-type domain is found at 260–453 (RIAVAAIYFP…FHGIIDEPEV (194 aa)). Catalysis depends on cysteine 341, which acts as the Nucleophile. The active site involves histidine 445.

Belongs to the CobB/CobQ family. CobQ subfamily.

The protein operates within cofactor biosynthesis; adenosylcobalamin biosynthesis. Its function is as follows. Catalyzes amidations at positions B, D, E, and G on adenosylcobyrinic A,C-diamide. NH(2) groups are provided by glutamine, and one molecule of ATP is hydrogenolyzed for each amidation. In Chlorobium phaeobacteroides (strain DSM 266 / SMG 266 / 2430), this protein is Cobyric acid synthase.